A 368-amino-acid polypeptide reads, in one-letter code: Glycoprotein UL18 (368 aa).

The N-terminal stretch at 1-18 (MMTMWCLTLFVLWMLRVV) is a signal peptide. Residues 19 to 114 (GMHVLRYGYT…EIALGYRSQS (96 aa)) form an alpha-1-like region. Residues N56, N66, N74, N95, N123, N127, N150, N167, N177, N193, N240, N282, and N291 are each glycosylated (N-linked (GlcNAc...) asparagine; by host). The tract at residues 115–208 (VLTWTHECNT…VIYSGFQPPV (94 aa)) is alpha-2-like. The alpha-3-like stretch occupies residues 209–303 (THPVVKGGVR…VEIPISVTSP (95 aa)). A helical membrane pass occupies residues 321–342 (YNTMTISSVLLALLLCALLFAF).

As to quaternary structure, interacts with host LILRB1.

It is found in the host membrane. Functionally, plays a role in the protection against host NK cell cytotoxicity by interacting with and modulating the activity of the host inhibitory leukocyte Ig-like receptor 1/LILRB1, which is expressed on monocytes, dendritic cells, as well as subsets of T and NK cells. UL18 exerts an inhibitory effect on LIR-1+ NK cells, while it stimulates LIR-1- NK cell. These modulations prevent lysis of the infected cells by NK cells. The chain is Glycoprotein UL18 (H301) from Homo sapiens (Human).